The sequence spans 387 residues: Paralemmin-1 (387 aa).

Methionine 1 carries the post-translational modification N-acetylmethionine. A coiled-coil region spans residues threonine 9–glycine 101. 2 stretches are compositionally biased toward basic and acidic residues: residues lysine 31 to glutamine 41 and aspartate 69 to aspartate 102. The disordered stretch occupies residues lysine 31–aspartate 160. Low complexity predominate over residues alanine 104–proline 117. Phosphoserine occurs at positions 116 and 124. Phosphothreonine is present on residues threonine 141 and threonine 145. Residue serine 162 is modified to Phosphoserine. Threonine 243 is modified (phosphothreonine). A Phosphoserine modification is found at serine 245. Disordered regions lie at residues alanine 247 to proline 296 and alanine 335 to lysine 378. The span at glycine 286–proline 296 shows a compositional bias: low complexity. Residue serine 346 is modified to Phosphoserine. The residue at position 367 (threonine 367) is a Phosphothreonine. Residue serine 369 is modified to Phosphoserine. Residues cysteine 381 and cysteine 383 are each lipidated (S-palmitoyl cysteine). Cysteine 384 bears the Cysteine methyl ester mark. Cysteine 384 carries S-farnesyl cysteine lipidation. The propeptide at serine 385 to methionine 387 is removed in mature form.

The protein belongs to the paralemmin family. In terms of assembly, interacts with dopamine receptor DRD3. In terms of tissue distribution, widely expressed with highest expression in brain and testis and intermediate expression in heart and adrenal gland.

The protein localises to the cell membrane. The protein resides in the cell projection. Its subcellular location is the filopodium membrane. It is found in the axon. It localises to the dendrite. The protein localises to the dendritic spine. The protein resides in the basolateral cell membrane. Its subcellular location is the apicolateral cell membrane. Functionally, involved in plasma membrane dynamics and cell process formation. Isoform 1 and isoform 2 are necessary for axonal and dendritic filopodia induction, for dendritic spine maturation and synapse formation in a palmitoylation-dependent manner. The chain is Paralemmin-1 (PALM) from Homo sapiens (Human).